The primary structure comprises 451 residues: CDP-diacylglycerol--serine O-phosphatidyltransferase PssA (451 aa).

2 consecutive PLD phosphodiesterase domains span residues 27-224 (VDFF…ELRD) and 239-451 (SVTP…SRIL). A CDP-1,2-diacyl-sn-glycerol is bound by residues L56, Y57, R91, R94, R96, I97, E132, A133, V136, H138, K140, G152, Y159, and R167. H138 is a catalytic residue. D169 is an active-site residue. A CDP-1,2-diacyl-sn-glycerol-binding residues include Y273, D305, F306, I316, I317, L320, L323, and Y324. H357 is a catalytic residue. A CDP-1,2-diacyl-sn-glycerol-binding residues include K359, N374, and R378. Residue E385 is part of the active site. A CDP-1,2-diacyl-sn-glycerol-binding residues include L438, I447, I450, and L451.

This sequence belongs to the CDP-alcohol phosphatidyltransferase class-II family. Multimeric. Interacts with ACP, YbgC and PlsB, forming altogether a complex at the inner membrane. Monomeric and dimeric; existing in equilibrium, but the monomer probably exhibits preferential membrane association.

It is found in the cytoplasm. Its subcellular location is the cell inner membrane. It carries out the reaction a CDP-1,2-diacyl-sn-glycerol + L-serine = a 1,2-diacyl-sn-glycero-3-phospho-L-serine + CMP + H(+). It functions in the pathway phospholipid metabolism; phosphatidylethanolamine biosynthesis; phosphatidylethanolamine from CDP-diacylglycerol: step 1/2. Catalyzes the conversion of cytidine diphosphate diacylglycerol (CDP-DG) and L-serine into phosphatidylserine. Essential for biosynthesis of phosphatidylethanolamine, one of the major membrane phospholipids. Phosphatidylserine is later converted into phosphatidylethanolamine via the action of phosphatidylserine decarboxylase psd. Associates with the bacterial membrane for its role, which depends on the levels of anionic phospholipids in the membrane. The chain is CDP-diacylglycerol--serine O-phosphatidyltransferase PssA (pssA) from Escherichia coli (strain K12).